A 103-amino-acid polypeptide reads, in one-letter code: MKLYSVAYIPQSYEVLGLVKGSMVQSKHIGRDIMAGLKGIVGGEIKGYTEMLNDARNIATDRMIEEAHALGANGIIGISYVTSSLMSNTSEVLVYGTAVKILS.

Belongs to the UPF0145 family.

In Helicobacter hepaticus (strain ATCC 51449 / 3B1), this protein is UPF0145 protein HH_1800.